The following is an 87-amino-acid chain: Large ribosomal subunit protein uL23c (87 aa).

The protein belongs to the universal ribosomal protein uL23 family. In terms of assembly, part of the 50S ribosomal subunit.

The protein localises to the plastid. Its subcellular location is the chloroplast. Functionally, binds to 23S rRNA. The chain is Large ribosomal subunit protein uL23c (rpl23) from Ostreococcus tauri.